The primary structure comprises 360 residues: 45 kDa calcium-binding protein (360 aa).

A signal peptide spans 1-29; that stretch reads MVSKQAFLFSLGSLYLSLLFIFLLMDVYA. N33 carries an N-linked (GlcNAc...) asparagine glycan. 5 EF-hand domains span residues 96 to 131, 135 to 170, 231 to 266, 276 to 311, and 312 to 347; these read RNRR…KTEE, EAVN…SKGF, MLKF…TVEN, WVRD…MNEY, and NALN…FTGS. Residues D109, N111, D113, Q115, E120, D148, D150, D152, H154, E159, D244, D246, D248, K250, E255, D289, N291, D293, E300, D325, N327, D329, and E336 each coordinate Ca(2+).

It belongs to the CREC family.

The protein localises to the golgi apparatus lumen. Functionally, may regulate calcium-dependent activities in the endoplasmic reticulum lumen or post-ER compartment. This Xenopus laevis (African clawed frog) protein is 45 kDa calcium-binding protein (sdf4).